The chain runs to 501 residues: Aromatase 3 (501 aa).

Residue Cys-435 participates in heme binding.

It belongs to the cytochrome P450 family. Heme serves as cofactor. As to expression, ovary.

The protein resides in the membrane. It catalyses the reaction testosterone + 3 reduced [NADPH--hemoprotein reductase] + 3 O2 = 17beta-estradiol + formate + 3 oxidized [NADPH--hemoprotein reductase] + 4 H2O + 4 H(+). It carries out the reaction androst-4-ene-3,17-dione + 3 reduced [NADPH--hemoprotein reductase] + 3 O2 = estrone + formate + 3 oxidized [NADPH--hemoprotein reductase] + 4 H2O + 4 H(+). Catalyzes the formation of aromatic C18 estrogens from C19 androgens. This chain is Aromatase 3 (CYP19A3), found in Sus scrofa (Pig).